Reading from the N-terminus, the 472-residue chain is Ribulose bisphosphate carboxylase/oxygenase activase, chloroplastic (472 aa).

The transit peptide at Met-1 to Ala-58 directs the protein to the chloroplast. Gly-163–Ser-170 contributes to the ATP binding site. The interval Gly-448–Leu-472 is disordered. Residues Pro-452–Asp-465 are compositionally biased toward basic and acidic residues.

It belongs to the RuBisCO activase family.

It is found in the plastid. Its subcellular location is the chloroplast stroma. Activation of RuBisCO (ribulose-1,5-bisphosphate carboxylase/oxygenase; EC 4.1.1.39) involves the ATP-dependent carboxylation of the epsilon-amino group of lysine leading to a carbamate structure. The polypeptide is Ribulose bisphosphate carboxylase/oxygenase activase, chloroplastic (Spinacia oleracea (Spinach)).